A 122-amino-acid polypeptide reads, in one-letter code: Protein YqjC (122 aa).

An N-terminal signal peptide occupies residues 1–20 (MKYRIALAVSLFALSAGSYA). Positions 65–100 (QLRADHQKKIAKQKDEVAERQQDLAEAKQKGDADKI) are disordered. A compositionally biased stretch (basic and acidic residues) spans 66–100 (LRADHQKKIAKQKDEVAERQQDLAEAKQKGDADKI).

In Escherichia coli (strain K12), this protein is Protein YqjC (yqjC).